A 737-amino-acid polypeptide reads, in one-letter code: Methylcrotonoyl-CoA carboxylase subunit alpha, mitochondrial (737 aa).

The transit peptide at 1–33 (MASRLLLLPRRRSRHGGASLLLARLLSSSSSEA) directs the protein to the mitochondrion. In terms of domain architecture, Biotin carboxylation spans 38-485 (AVEKVLVANR…DTHFIERYQN (448 aa)). ATP contacts are provided by residues Lys153, 185 to 246 (ANKI…PRHI), Glu237, and His272. The ATP-grasp domain maps to 157 to 355 (KRIMGAAGVP…LVEWQIRIAN (199 aa)). Mn(2+) contacts are provided by Glu312, Glu326, and Asn328. Residue Arg330 is part of the active site. The disordered stretch occupies residues 636-665 (YRQTLRAEQSPDDSSQPSASSEARSHPKGS). Low complexity predominate over residues 647 to 657 (DDSSQPSASSE). A Biotinyl-binding domain is found at 656–732 (SEARSHPKGS…FDSSVLFTVK (77 aa)). Residue Lys698 is modified to N6-biotinyllysine.

Probably a heterodimer composed of biotin-containing alpha subunits and beta subunits. It depends on biotin as a cofactor. Requires Mn(2+) as cofactor.

It localises to the mitochondrion matrix. The enzyme catalyses 3-methylbut-2-enoyl-CoA + hydrogencarbonate + ATP = 3-methyl-(2E)-glutaconyl-CoA + ADP + phosphate + H(+). Its pathway is amino-acid degradation; L-leucine degradation; (S)-3-hydroxy-3-methylglutaryl-CoA from 3-isovaleryl-CoA: step 2/3. Functionally, biotin-attachment subunit of the 3-methylcrotonyl-CoA carboxylase, an enzyme that catalyzes the conversion of 3-methylcrotonyl-CoA to 3-methylglutaconyl-CoA, a critical step for leucine and isovaleric acid catabolism. The protein is Methylcrotonoyl-CoA carboxylase subunit alpha, mitochondrial (MCCA) of Oryza sativa subsp. japonica (Rice).